A 330-amino-acid chain; its full sequence is Fructose-1,6-bisphosphatase class 1 (330 aa).

Mg(2+) contacts are provided by Glu84, Asp103, Leu105, and Asp106. Residues 106-109 (DGSS), Asn196, and Lys262 each bind substrate. Glu268 contributes to the Mg(2+) binding site.

This sequence belongs to the FBPase class 1 family. In terms of assembly, homotetramer. Mg(2+) is required as a cofactor.

The protein localises to the cytoplasm. The catalysed reaction is beta-D-fructose 1,6-bisphosphate + H2O = beta-D-fructose 6-phosphate + phosphate. Its pathway is carbohydrate biosynthesis; gluconeogenesis. This Shewanella putrefaciens (strain CN-32 / ATCC BAA-453) protein is Fructose-1,6-bisphosphatase class 1.